The sequence spans 448 residues: Asparagine--tRNA ligase (448 aa).

This sequence belongs to the class-II aminoacyl-tRNA synthetase family. Homodimer.

The protein localises to the cytoplasm. It carries out the reaction tRNA(Asn) + L-asparagine + ATP = L-asparaginyl-tRNA(Asn) + AMP + diphosphate + H(+). The protein is Asparagine--tRNA ligase of Streptococcus pyogenes serotype M2 (strain MGAS10270).